The following is a 356-amino-acid chain: Protein-arginine kinase (356 aa).

Positions 24–256 constitute a Phosphagen kinase C-terminal domain; sequence IIISSRVRVA…RQILAQEQAA (233 aa). Residues 27-31, histidine 93, arginine 127, 178-182, and 209-214 each bind ATP; these read SSRVR, RASVM, and RGLYGE. The RDXXRA motif of the pArg binding pocket involved in allosteric regulation signature appears at 339 to 344; sequence RDIFRA.

This sequence belongs to the ATP:guanido phosphotransferase family.

It carries out the reaction L-arginyl-[protein] + ATP = N(omega)-phospho-L-arginyl-[protein] + ADP + H(+). With respect to regulation, appears to be allosterically activated by the binding of pArg-containing polypeptides to the pArg-binding pocket localized in the C-terminal domain of McsB. Catalyzes the specific phosphorylation of arginine residues in proteins. This chain is Protein-arginine kinase, found in Pelotomaculum thermopropionicum (strain DSM 13744 / JCM 10971 / SI).